Consider the following 79-residue polypeptide: uncharacterized protein (79 aa).

Residues 20–52 are disordered; that stretch reads TERGAGLSPAAPPDPSPAIAPTMAEGGVPSPGP.

This is an uncharacterized protein from Homo sapiens (Human).